Here is a 93-residue protein sequence, read N- to C-terminus: Stromal cell-derived factor 1 (93 aa).

The first 21 residues, 1–21 (MDIRTLALFSILLGSLCLSEG), serve as a signal peptide directing secretion. Residues 22–23 (KP) carry the Receptor activation motif motif. The receptor and heparin binding stretch occupies residues 29-33 (RCPCR). Disulfide bonds link cysteine 30–cysteine 55 and cysteine 32–cysteine 71. Residues 41-51 (KSNIKHLKILS), arginine 62, glutamine 69, and lysine 85 each bind heparin. 2 receptor binding regions span residues 48 to 50 (KIL) and 60 to 64 (VARLK).

It belongs to the intercrine alpha (chemokine CxC) family. In terms of assembly, monomer or homodimer; in equilibrium. Dimer formation is induced by non acidic pH and the presence of multivalent anions, and by binding to cxcr4 or heparin.

The protein localises to the secreted. Its function is as follows. Chemoattractant. Activates the C-X-C chemokine receptor cxcr4 to induce a rapid and transient rise in the level of intracellular calcium ions, and chemotaxis. Signaling with cxcr4 mediates the directional movement of mesodermal cells during gastrulation. Binds to the allosteric site (site 2) of integrins and activates them in a cxcr4-independent manner. This is Stromal cell-derived factor 1 from Xenopus tropicalis (Western clawed frog).